An 847-amino-acid chain; its full sequence is Acyl-homoserine lactone acylase QuiP (847 aa).

Residues 1 to 26 (MASPAFMRFLPRCGAAAAFGTLLGLA) form the signal peptide. Catalysis depends on Ser265, which acts as the Nucleophile.

The protein belongs to the peptidase S45 family. In terms of assembly, heterodimer of an alpha subunit and a beta subunit processed from the same precursor.

Its subcellular location is the periplasm. It carries out the reaction an N-acyl-L-homoserine lactone + H2O = L-homoserine lactone + a carboxylate. Its function is as follows. Catalyzes the deacylation of acyl-homoserine lactone (AHL or acyl-HSL), releasing homoserine lactone (HSL) and the corresponding fatty acid. Possesses a specificity for the degradation of long-chain acyl-HSLs (side chains of seven or more carbons in length). Appears to be the acyl-HSL acylase that underlies the ability of P.aeruginosa to degrade and utilize certain acyl-HSLs as growth nutrients, including one of its own quorum signals, 3-oxo-C12-HSL. Is thought to have a role in quorum quenching. This Pseudomonas aeruginosa (strain ATCC 15692 / DSM 22644 / CIP 104116 / JCM 14847 / LMG 12228 / 1C / PRS 101 / PAO1) protein is Acyl-homoserine lactone acylase QuiP (quiP).